Here is a 189-residue protein sequence, read N- to C-terminus: Peptidyl-tRNA hydrolase (189 aa).

Y14 serves as a coordination point for tRNA. H19 functions as the Proton acceptor in the catalytic mechanism. TRNA is bound by residues Y64, N66, and N112.

This sequence belongs to the PTH family. Monomer.

It is found in the cytoplasm. It catalyses the reaction an N-acyl-L-alpha-aminoacyl-tRNA + H2O = an N-acyl-L-amino acid + a tRNA + H(+). Hydrolyzes ribosome-free peptidyl-tRNAs (with 1 or more amino acids incorporated), which drop off the ribosome during protein synthesis, or as a result of ribosome stalling. In terms of biological role, catalyzes the release of premature peptidyl moieties from peptidyl-tRNA molecules trapped in stalled 50S ribosomal subunits, and thus maintains levels of free tRNAs and 50S ribosomes. The polypeptide is Peptidyl-tRNA hydrolase (Clostridium botulinum (strain Langeland / NCTC 10281 / Type F)).